The chain runs to 783 residues: Heat shock transcription factor (783 aa).

The disordered stretch occupies residues 1–59; sequence MTTNLYAIAGPSKPTTPTSTPSPRSEPPSPLKSLTSLPTNPLNSHGTSTPNTLTNQLSS. 2 stretches are compositionally biased toward low complexity: residues 11-23 and 31-42; these read PSKP…TPSP and LKSLTSLPTNPL. Over residues 43–59 the composition is skewed to polar residues; that stretch reads NSHGTSTPNTLTNQLSS. The DNA-binding element occupies 78–168; it reads MKVPAFLNKL…PIELWEFANP (91 aa). Residues 181 to 262 are disordered; it reads VTRKNNRPSN…PGSVPPSHTS (82 aa). 2 stretches are compositionally biased toward low complexity: residues 189 to 199 and 209 to 233; these read SNSGVGPSSSV and STRS…ISQG. Polar residues predominate over residues 238–262; the sequence is NHSTSGKYLITDGTTPGSVPPSHTS. Residues 280–333 are involved in trimerization; that stretch reads GIAAIRQTQASIATDLRKLQASNEALWRQAYETQEKQRKHEETIDLIVSFLERL. Basic and acidic residues-rich tracts occupy residues 350–372 and 399–415; these read RGVG…SRFA and TGEH…DRLV. Disordered stretches follow at residues 350-554, 599-652, and 736-783; these read RGVG…LLSP, QALA…TLAL, and QGLA…KSES. The segment covering 418–448 has biased composition (polar residues); that stretch reads GSNSEYSIPSVKRTSSSSHPISLGQLGSSRF. Low complexity-rich tracts occupy residues 452–467, 497–511, 522–550, and 616–632; these read PSED…GSTS, LSPL…PSSS, PFPS…PSQP, and NPNG…AHGM. Acidic residues predominate over residues 742 to 752; sequence GEEEGEREVEG. The segment covering 753-765 has biased composition (gly residues); sequence DGGVSSSGAGAGA.

This sequence belongs to the HSF family. In terms of assembly, homotrimer. Homotrimerization increases the affinity of HSF1 to DNA. Interacts with transcriptional coregulator SSA1 on chromatin.

Its subcellular location is the nucleus. In terms of biological role, DNA-binding transcription factor that specifically binds heat shock promoter elements (HSE) and activates transcription. Together with its coregulator SSA1, activates expression of laccase LAC1 during glucose starvation. This chain is Heat shock transcription factor, found in Cryptococcus neoformans var. neoformans serotype D (strain JEC21 / ATCC MYA-565) (Filobasidiella neoformans).